Reading from the N-terminus, the 1390-residue chain is DNA-directed RNA polymerase subunit beta (1390 aa).

The protein belongs to the RNA polymerase beta chain family. As to quaternary structure, the RNAP catalytic core consists of 2 alpha, 1 beta, 1 beta' and 1 omega subunit. When a sigma factor is associated with the core the holoenzyme is formed, which can initiate transcription.

The enzyme catalyses RNA(n) + a ribonucleoside 5'-triphosphate = RNA(n+1) + diphosphate. Functionally, DNA-dependent RNA polymerase catalyzes the transcription of DNA into RNA using the four ribonucleoside triphosphates as substrates. The polypeptide is DNA-directed RNA polymerase subunit beta (Methylobacillus flagellatus (strain ATCC 51484 / DSM 6875 / VKM B-1610 / KT)).